Consider the following 309-residue polypeptide: Vacuolar membrane protein YOR292C (309 aa).

Over 1–52 (MPLQLFGRDQIVVHYDNGNMSNDDQNHQSVLGSWTRRAAAALRTLMNKRIQR) the chain is Vacuolar. An N-linked (GlcNAc...) asparagine glycan is attached at Asn-19. A helical transmembrane segment spans residues 53–73 (ITLTHWLLLVIWVTSLWKFTS). The Cytoplasmic segment spans residues 74-81 (HYRQLYAN). A helical transmembrane segment spans residues 82-102 (SAVFATLCTNILLFGISDILA). The Vacuolar segment spans residues 103-183 (QSIACFYSYH…KTDTFDFFRW (81 aa)). N-linked (GlcNAc...) asparagine glycosylation is present at Asn-121. Residues 184-204 (GCFMFWGFFISFFQAPWYKFL) traverse the membrane as a helical segment. Over 205-225 (NFFYTEDPTVVQVFERVLSDQ) the chain is Cytoplasmic. The chain crosses the membrane as a helical span at residues 226-246 (LLYSPISLYCFFMFSNYVMEG). At 247–260 (GDKDTLGKKIQRLY) the chain is on the vacuolar side. The chain crosses the membrane as a helical span at residues 261–281 (ISTLGCNYLVWPMVQFINFLI). At 282-309 (MPRDFQAPFSSSVGVVWNCFLSMRNASK) the chain is on the cytoplasmic side.

It belongs to the peroxisomal membrane protein PXMP2/4 family. In terms of processing, N-glycosylated.

It localises to the vacuole membrane. The polypeptide is Vacuolar membrane protein YOR292C (Saccharomyces cerevisiae (strain ATCC 204508 / S288c) (Baker's yeast)).